The sequence spans 400 residues: Probable transposase for insertion sequence element ISRM3-like (400 aa).

Belongs to the transposase mutator family.

Functionally, required for the transposition of the insertion element. The sequence is that of Probable transposase for insertion sequence element ISRM3-like from Sinorhizobium fredii (strain NBRC 101917 / NGR234).